The chain runs to 927 residues: 2-oxoadipate dehydrogenase complex component E1 (927 aa).

This sequence belongs to the alpha-ketoglutarate dehydrogenase family. The 2-oxoadipate dehydrogenase complex is composed of OADH (2-oxoadipate dehydrogenase; E1a), DLST (dihydrolipoamide succinyltransferase; E2) and DLD (dihydrolipoamide dehydrogenase; E3). E1a functional unit is a dimer. Thiamine diphosphate is required as a cofactor.

It localises to the mitochondrion. The enzyme catalyses N(6)-[(R)-lipoyl]-L-lysyl-[protein] + 2-oxoadipate + H(+) = N(6)-[(R)-S(8)-glutaryldihydrolipoyl]-L-lysyl-[protein] + CO2. The protein operates within amino-acid degradation. Functionally, 2-oxoadipate dehydrogenase (E1a) component of the 2-oxoadipate dehydrogenase complex (OADHC). Participates in the first step, rate limiting for the overall conversion of 2-oxoadipate (alpha-ketoadipate) to glutaryl-CoA and CO(2) catalyzed by the whole OADHC. Catalyzes the irreversible decarboxylation of 2-oxoadipate via the thiamine diphosphate (ThDP) cofactor and subsequent transfer of the decarboxylated acyl intermediate on an oxidized dihydrolipoyl group that is covalently amidated to the E2 enzyme (dihydrolipoyllysine-residue succinyltransferase or DLST). Can catalyze the decarboxylation of 2-oxoglutarate in vitro, but at a much lower rate than 2-oxoadipate. Responsible for the last step of L-lysine, L-hydroxylysine and L-tryptophan catabolism with the common product being 2-oxoadipate. The polypeptide is 2-oxoadipate dehydrogenase complex component E1 (dhtkd1) (Xenopus laevis (African clawed frog)).